The following is a 424-amino-acid chain: UPF0229 protein PFL_5654 (424 aa).

Residues 85-108 (GEHIARPQGGGGGGGGRGKAGNSG) are disordered. A compositionally biased stretch (gly residues) spans 92-108 (QGGGGGGGGRGKAGNSG).

This sequence belongs to the UPF0229 family.

In Pseudomonas fluorescens (strain ATCC BAA-477 / NRRL B-23932 / Pf-5), this protein is UPF0229 protein PFL_5654.